The sequence spans 614 residues: Afadin- and alpha-actinin-binding protein (614 aa).

Coiled-coil stretches lie at residues methionine 131–aspartate 227 and arginine 266–serine 293. Phosphoserine occurs at positions 290, 293, and 312. The tract at residues leucine 292 to aspartate 317 is disordered. The stretch at isoleucine 374–leucine 460 forms a coiled coil. Residues serine 536, serine 540, and serine 542 each carry the phosphoserine modification.

Belongs to the ADIP family. As to quaternary structure, interacts with afadin and alpha-actinin. Interacts with VAV2. Interacts with SSX2 and SSX3. Does not interact with SSX1 and SSX4. Interacts with PCM1. Interacts with WRAP73. In terms of tissue distribution, widely expressed, with the highest expression in brain, intermediate expression in kidney, testis, spinal cord, liver, heart, lung, skeletal muscle, ovary, fetal liver and fetal brain, and little to no expression in pancreas and spleen. All specific brain regions showed intermediate to high expression, with highest expression in amygdala. Also expressed in fetal tissues, mainly in liver and brain.

It is found in the cell junction. It localises to the adherens junction. The protein localises to the nucleus. The protein resides in the cytoplasm. Its subcellular location is the cytoskeleton. It is found in the microtubule organizing center. It localises to the centrosome. The protein localises to the centriolar satellite. The protein resides in the cilium basal body. Belongs to an adhesion system, which plays a role in the organization of homotypic, interneuronal and heterotypic cell-cell adherens junctions (AJs). May connect the nectin-afadin and E-cadherin-catenin system through alpha-actinin and may be involved in organization of the actin cytoskeleton at AJs through afadin and alpha-actinin. Involved in cell movement: localizes at the leading edge of moving cells in response to PDGF and is required for the formation of the leading edge and the promotion of cell movement, possibly via activation of Rac signaling. Acts as a centrosome maturation factor, probably by maintaining the integrity of the pericentriolar material and proper microtubule nucleation at mitotic spindle poles. The function seems to implicate at least in part WRAP73; the SSX2IP:WRAP73 complex is proposed to act as regulator of spindle anchoring at the mitotic centrosome. Involved in ciliogenesis. It is required for targeted recruitment of the BBSome, CEP290, RAB8, and SSTR3 to the cilia. The polypeptide is Afadin- and alpha-actinin-binding protein (SSX2IP) (Homo sapiens (Human)).